A 336-amino-acid chain; its full sequence is Phosphate acyltransferase (336 aa).

It belongs to the PlsX family. As to quaternary structure, homodimer. Probably interacts with PlsY.

It localises to the cytoplasm. It catalyses the reaction a fatty acyl-[ACP] + phosphate = an acyl phosphate + holo-[ACP]. It participates in lipid metabolism; phospholipid metabolism. Its function is as follows. Catalyzes the reversible formation of acyl-phosphate (acyl-PO(4)) from acyl-[acyl-carrier-protein] (acyl-ACP). This enzyme utilizes acyl-ACP as fatty acyl donor, but not acyl-CoA. In Pseudomonas putida (strain ATCC 47054 / DSM 6125 / CFBP 8728 / NCIMB 11950 / KT2440), this protein is Phosphate acyltransferase.